A 160-amino-acid polypeptide reads, in one-letter code: MAEKTYPMTLEEKEKLEKELEELKLVRRPEVVERIKIARSYGDLSENSEYEAAKDEQAFVEGQISSLETKIRYAEIVNSDAVAQDEVAIGKTVTIQEIGEDEEEVYIIVGSAGADAFVGKVSNESPIGQALIGKKTGDTATIETPVGSYDVKILKVEKTA.

The stretch at 1–72 (MAEKTYPMTL…QISSLETKIR (72 aa)) forms a coiled coil.

The protein belongs to the GreA/GreB family.

Functionally, necessary for efficient RNA polymerase transcription elongation past template-encoded arresting sites. The arresting sites in DNA have the property of trapping a certain fraction of elongating RNA polymerases that pass through, resulting in locked ternary complexes. Cleavage of the nascent transcript by cleavage factors such as GreA or GreB allows the resumption of elongation from the new 3'terminus. GreA releases sequences of 2 to 3 nucleotides. In Streptococcus pneumoniae serotype 4 (strain ATCC BAA-334 / TIGR4), this protein is Transcription elongation factor GreA.